A 747-amino-acid chain; its full sequence is Photosystem I P700 chlorophyll a apoprotein A2 (747 aa).

8 consecutive transmembrane segments (helical) span residues Leu46–Ala69, Leu135–Gln158, Leu175–Ile199, Ile273–Tyr291, Leu341–Gly364, Ser380–Val406, Ala428–His450, and Phe530–Ile548. Cys572 and Cys581 together coordinate [4Fe-4S] cluster. Helical transmembrane passes span Ala588–Trp609 and Leu656–Ile678. Residues His667, Met675, and Tyr683 each coordinate divinyl chlorophyll a. Position 684 (Trp684) interacts with phylloquinone. Residues Leu720–Ala740 traverse the membrane as a helical segment.

This sequence belongs to the PsaA/PsaB family. As to quaternary structure, the PsaA/B heterodimer binds the P700 divinyl chlorophyll special pair and subsequent electron acceptors. PSI consists of a core antenna complex that captures photons, and an electron transfer chain that converts photonic excitation into a charge separation. The cyanobacterial PSI reaction center is composed of one copy each of PsaA,B,C,D,E,F,I,J,K,L,M and X, and forms trimeric complexes. PSI electron transfer chain: 5 divinyl chlorophyll a, 1 divinyl chlorophyll a', 2 phylloquinones and 3 4Fe-4S clusters. PSI core antenna: 90 divinyl chlorophyll a, 22 carotenoids, 3 phospholipids and 1 galactolipid. P700 is a divinyl chlorophyll a/divinyl chlorophyll a' dimer, A0 is one or more divinyl chlorophyll a, A1 is one or both phylloquinones and FX is a shared 4Fe-4S iron-sulfur center. serves as cofactor.

The protein localises to the cellular thylakoid membrane. It carries out the reaction reduced [plastocyanin] + hnu + oxidized [2Fe-2S]-[ferredoxin] = oxidized [plastocyanin] + reduced [2Fe-2S]-[ferredoxin]. PsaA and PsaB bind P700, the primary electron donor of photosystem I (PSI), as well as the electron acceptors A0, A1 and FX. PSI is a plastocyanin/cytochrome c6-ferredoxin oxidoreductase, converting photonic excitation into a charge separation, which transfers an electron from the donor P700 chlorophyll pair to the spectroscopically characterized acceptors A0, A1, FX, FA and FB in turn. Oxidized P700 is reduced on the lumenal side of the thylakoid membrane by plastocyanin or cytochrome c6. This chain is Photosystem I P700 chlorophyll a apoprotein A2, found in Prochlorococcus marinus (strain SARG / CCMP1375 / SS120).